The sequence spans 967 residues: A disintegrin and metalloproteinase with thrombospondin motifs 1 (967 aa).

Disordered stretches follow at residues 1–27 (MQRA…APGS) and 192–250 (GDVG…SIRK). The signal sequence occupies residues 1–49 (MQRAVPEGFGRRKLGSDMGNAERAPGSRSFGPVPTLLLLAAALLAVSDA). Positions 50-252 (LGRPSEEDEE…TGTGSIRKKR (203 aa)) are excised as a propeptide. The Cysteine switch motif lies at 196-203 (GTCGVVDD). Position 198 (Cys-198) interacts with Zn(2+). Positions 203 to 212 (DEPRPTGKAE) are enriched in basic and acidic residues. Residues 213–226 (TEDEDEGTEGEDEG) show a composition bias toward acidic residues. A Peptidase M12B domain is found at 258–467 (RYVETMLVAD…GHGECLMDKP (210 aa)). Ca(2+) contacts are provided by Glu-261, Asp-344, and Asp-351. Intrachain disulfides connect Cys-333-Cys-385, Cys-362-Cys-367, Cys-379-Cys-462, and Cys-417-Cys-446. His-401 is a binding site for Zn(2+). Glu-402 is an active-site residue. Positions 405 and 411 each coordinate Zn(2+). 2 residues coordinate Ca(2+): Cys-462 and Asp-465. Positions 476 to 559 (DLPGTSYDAN…DRKHFDTPFH (84 aa)) constitute a Disintegrin domain. 4 disulfide bridges follow: Cys-488–Cys-511, Cys-499–Cys-521, Cys-506–Cys-540, and Cys-534–Cys-545. Asn-547 carries N-linked (GlcNAc...) asparagine glycosylation. One can recognise a TSP type-1 1 domain in the interval 559 to 614 (HGSWGMWGPWGDCSRTCGGGVQYTMRECDNPVPKNGGKYCEGKRVRYRSCNLEDCP). 3 disulfide bridges follow: Cys-571-Cys-608, Cys-575-Cys-613, and Cys-586-Cys-598. Asn-720 and Asn-764 each carry an N-linked (GlcNAc...) asparagine glycan. A spacer region spans residues 725–849 (KKISGSVTSA…YFVKKKKESF (125 aa)). TSP type-1 domains lie at 854 to 905 (TFSA…RPCA) and 908 to 967 (PCPQ…AECS).

Zn(2+) serves as cofactor. The precursor is cleaved by a furin endopeptidase. In terms of processing, glycosylated. Can be O-fucosylated by POFUT2 on a serine or a threonine residue found within the consensus sequence C1-X(2)-(S/T)-C2-G of the TSP type-1 repeat domains where C1 and C2 are the first and second cysteine residue of the repeat, respectively. Fucosylated repeats can then be further glycosylated by the addition of a beta-1,3-glucose residue by the glucosyltransferase, B3GALTL. Fucosylation mediates the efficient secretion of ADAMTS family members. Can also be C-glycosylated with one or two mannose molecules on tryptophan residues within the consensus sequence W-X-X-W of the TPRs, and N-glycosylated. These other glycosylations can also facilitate secretion.

The protein resides in the secreted. Its subcellular location is the extracellular space. It localises to the extracellular matrix. Functionally, metalloprotease which cleaves aggrecan, a cartilage proteoglycan, at the '1938-Glu-|-Leu-1939' site (within the chondroitin sulfate attachment domain), and may be involved in its turnover. Also cleaves COMP. Has angiogenic inhibitor activity. May play a critical role in follicular rupture. This Homo sapiens (Human) protein is A disintegrin and metalloproteinase with thrombospondin motifs 1 (ADAMTS1).